Reading from the N-terminus, the 434-residue chain is Forkhead box protein A2-A (434 aa).

The fork-head DNA-binding region spans 149 to 243 (KPPYSYISLI…ENGCYLRRQK (95 aa)). Basic and acidic residues predominate over residues 249-262 (KKPSLREGGGKKLS). Disordered stretches follow at residues 249–339 (KKPS…QSHL) and 408–434 (SGLE…MNSS). 2 stretches are compositionally biased toward low complexity: residues 263-291 (EGAS…SSSP) and 317-333 (ASQA…VLSH). The span at 408–422 (SGLESSPITSDTSYY) shows a compositional bias: polar residues.

At gastrula stage, expressed in both the anterior and posterior endoderm, with endodermal expression persisting into early tailbud stages. Expression is absent in gastrula stage ectoderm. During tailbud stages, expressed in the pharyngeal region, the neural floor plate, the midbrain, hindbrain and in cranial neural crest cells. Expressed in the foregut of hatching larvae. In tadpoles, expressed in the pharyngeal pouches and in other anterior endodermal regions. Within the tadpole nervous system, expressed in the neural floor plate, at high levels in the ventral midbrain and hindbrain, and at lower levels in the spinal cord. Expressed in the adult lung and brain.

It is found in the nucleus. Acts as a transcriptional activator during early development, limiting the extent of mesoderm formation in the gastrula. Binds to DNA via the target sequence 5'-GT[AC]AACA-3', with 5'-GTAAACA-3' being the preferred binding site. This chain is Forkhead box protein A2-A (foxa2-a), found in Xenopus laevis (African clawed frog).